The sequence spans 303 residues: Cysteine synthase B (303 aa).

The residue at position 41 (Lys-41) is an N6-(pyridoxal phosphate)lysine. Residues Asn-71, 174–178, and Ser-255 each bind pyridoxal 5'-phosphate; that span reads GTTGT.

This sequence belongs to the cysteine synthase/cystathionine beta-synthase family. It depends on pyridoxal 5'-phosphate as a cofactor.

It carries out the reaction O-acetyl-L-serine + hydrogen sulfide = L-cysteine + acetate. It functions in the pathway amino-acid biosynthesis; L-cysteine biosynthesis; L-cysteine from L-serine: step 2/2. Two cysteine synthase enzymes are found. Both catalyze the same reaction. Cysteine synthase B can also use thiosulfate in place of sulfide to give cysteine thiosulfonate as a product. The protein is Cysteine synthase B (cysM) of Salmonella typhimurium (strain LT2 / SGSC1412 / ATCC 700720).